The following is a 212-amino-acid chain: uncharacterized protein (212 aa).

Residues 186-206 (VITLISFMLFSILFFLIFLIV) traverse the membrane as a helical segment.

It is found in the membrane. This is an uncharacterized protein from Mycoplasma genitalium (strain ATCC 33530 / DSM 19775 / NCTC 10195 / G37) (Mycoplasmoides genitalium).